A 652-amino-acid chain; its full sequence is p-hydroxybenzoic acid efflux pump subunit AaeB (652 aa).

11 helical membrane-spanning segments follow: residues 8–28 (FPIK…HFNL), 34–54 (AVMT…GDPF), 64–84 (LRII…IATI), 88–108 (ALMM…SSLI), 118–138 (LAGY…SVLL), 149–169 (EIII…PRSV), 367–387 (LFWL…LAVI), 404–424 (FLYG…VIMP), 429–449 (SMLL…ILIQ), 453–473 (IGTL…NPMT), and 480–500 (LDNA…ILLI).

Belongs to the aromatic acid exporter ArAE (TC 2.A.85) family.

It is found in the cell inner membrane. In terms of biological role, forms an efflux pump with AaeA. Could function as a metabolic relief valve, allowing to eliminate certain compounds when they accumulate to high levels in the cell. This chain is p-hydroxybenzoic acid efflux pump subunit AaeB, found in Erwinia billingiae (strain Eb661).